The following is a 71-amino-acid chain: Protein SlyX homolog (71 aa).

The protein belongs to the SlyX family.

The sequence is that of Protein SlyX homolog from Azotobacter vinelandii (strain DJ / ATCC BAA-1303).